A 206-amino-acid chain; its full sequence is Protein GrpE (206 aa).

A disordered region spans residues Met-1–Gly-36.

It belongs to the GrpE family. Homodimer.

It localises to the cytoplasm. Its function is as follows. Participates actively in the response to hyperosmotic and heat shock by preventing the aggregation of stress-denatured proteins, in association with DnaK and GrpE. It is the nucleotide exchange factor for DnaK and may function as a thermosensor. Unfolded proteins bind initially to DnaJ; upon interaction with the DnaJ-bound protein, DnaK hydrolyzes its bound ATP, resulting in the formation of a stable complex. GrpE releases ADP from DnaK; ATP binding to DnaK triggers the release of the substrate protein, thus completing the reaction cycle. Several rounds of ATP-dependent interactions between DnaJ, DnaK and GrpE are required for fully efficient folding. This chain is Protein GrpE, found in Rhodopseudomonas palustris (strain HaA2).